We begin with the raw amino-acid sequence, 595 residues long: Probable serine/threonine-protein kinase fhkC (595 aa).

The segment at M1–D84 is disordered. The span at E18–Q31 shows a compositional bias: low complexity. A compositionally biased stretch (polar residues) spans I32 to D49. A compositionally biased stretch (low complexity) spans N50–N70. The FHA domain occupies I116–I170. The 262-residue stretch at Y218–F479 folds into the Protein kinase domain. ATP-binding positions include L224 to V232 and K247. D342 acts as the Proton acceptor in catalysis. A Phosphothreonine; by autocatalysis modification is found at T377. The disordered stretch occupies residues K494–N595. Residues P508–V520 show a composition bias toward polar residues. Residues D530–N567 are compositionally biased toward low complexity. Positions N585–N595 are enriched in basic and acidic residues.

This sequence belongs to the protein kinase superfamily. CAMK Ser/Thr protein kinase family. CHK2 subfamily.

The catalysed reaction is L-seryl-[protein] + ATP = O-phospho-L-seryl-[protein] + ADP + H(+). It catalyses the reaction L-threonyl-[protein] + ATP = O-phospho-L-threonyl-[protein] + ADP + H(+). The sequence is that of Probable serine/threonine-protein kinase fhkC (fhkC) from Dictyostelium discoideum (Social amoeba).